The following is a 207-amino-acid chain: Small heat shock protein hspG7 (207 aa).

The 178-residue stretch at 30 to 207 (KTIIDILPPM…YSNTIKININ (178 aa)) folds into the sHSP domain. Composition is skewed to low complexity over residues 84–101 (QQQQ…SSST) and 122–135 (STTS…ATTT). Positions 84–149 (QQQQLVIEKS…EDENKTKSSD (66 aa)) are disordered. The span at 136–149 (KENKEDENKTKSSD) shows a compositional bias: basic and acidic residues.

The protein belongs to the small heat shock protein (HSP20) family.

In Dictyostelium discoideum (Social amoeba), this protein is Small heat shock protein hspG7 (hspG7).